Reading from the N-terminus, the 319-residue chain is tRNA pseudouridine synthase B (319 aa).

The active-site Nucleophile is Asp-49.

It belongs to the pseudouridine synthase TruB family. Type 1 subfamily.

The catalysed reaction is uridine(55) in tRNA = pseudouridine(55) in tRNA. In terms of biological role, responsible for synthesis of pseudouridine from uracil-55 in the psi GC loop of transfer RNAs. In Aeromonas salmonicida (strain A449), this protein is tRNA pseudouridine synthase B.